The sequence spans 450 residues: Glutamyl-tRNA(Gln) amidotransferase subunit A, mitochondrial (450 aa).

Active-site charge relay system residues include K47 and S122. S146 acts as the Acyl-ester intermediate in catalysis.

It belongs to the amidase family. GatA subfamily. As to quaternary structure, subunit of the heterotrimeric GatFAB amidotransferase (AdT) complex, composed of A, B and F subunits.

The protein localises to the mitochondrion. It carries out the reaction L-glutamyl-tRNA(Gln) + L-glutamine + ATP + H2O = L-glutaminyl-tRNA(Gln) + L-glutamate + ADP + phosphate + H(+). Functionally, allows the formation of correctly charged Gln-tRNA(Gln) through the transamidation of misacylated Glu-tRNA(Gln) in the mitochondria. The reaction takes place in the presence of glutamine and ATP through an activated gamma-phospho-Glu-tRNA(Gln). In Candida albicans (strain WO-1) (Yeast), this protein is Glutamyl-tRNA(Gln) amidotransferase subunit A, mitochondrial.